The sequence spans 232 residues: tRNA (guanine-N(1)-)-methyltransferase (232 aa).

Residues Gly-108 and 128–133 contribute to the S-adenosyl-L-methionine site; that span reads IGDFIM.

The protein belongs to the RNA methyltransferase TrmD family. As to quaternary structure, homodimer.

The protein localises to the cytoplasm. It catalyses the reaction guanosine(37) in tRNA + S-adenosyl-L-methionine = N(1)-methylguanosine(37) in tRNA + S-adenosyl-L-homocysteine + H(+). In terms of biological role, specifically methylates guanosine-37 in various tRNAs. The chain is tRNA (guanine-N(1)-)-methyltransferase from Campylobacter fetus subsp. fetus (strain 82-40).